Consider the following 467-residue polypeptide: DEAD-box ATP-dependent RNA helicase CshA (467 aa).

The Q motif signature appears at threonine 2–alanine 30. Residues isoleucine 33–valine 203 form the Helicase ATP-binding domain. Residue alanine 46–threonine 53 coordinates ATP. The short motif at aspartate 151–aspartate 154 is the DEAD box element. In terms of domain architecture, Helicase C-terminal spans asparagine 214 to alanine 374. The segment at threonine 428–histidine 467 is disordered. Positions serine 457–histidine 467 are enriched in basic residues.

This sequence belongs to the DEAD box helicase family. CshA subfamily. Oligomerizes, may be a member of the RNA degradosome.

It localises to the cytoplasm. It catalyses the reaction ATP + H2O = ADP + phosphate + H(+). Functionally, DEAD-box RNA helicase possibly involved in RNA degradation. Unwinds dsRNA in both 5'- and 3'-directions, has RNA-dependent ATPase activity. The chain is DEAD-box ATP-dependent RNA helicase CshA from Geobacillus kaustophilus (strain HTA426).